Here is a 703-residue protein sequence, read N- to C-terminus: MLRGRSLSVTSLGGLPQWEVEELPVEELLLFEVAWEVTNKVGGIYTVIQTKAKTTADEWGENYFLIGPYFEHNMKTQVEQCEPVNDAVRRAVDAMNKHGCQVHFGRWLIEGSPYVVLFDIGYSAWNLDRWKGDLWEACSVGIPYHDREANDMLIFGSLTAWFLKEVTDHADGKYVVAQFHEWQAGIGLILSRARKLPIATIFTTHATLLGRYLCAANIDFYNHLDKFNIDKEAGERQIYHRYCMERASVHCAHVFTTVSEITAIEAEHMLKRKPDVVTPNGLNVKKFSAVHEFQNLHAMYKARIQDFVRGHFYGHLDFDLEKTLFLFIAGRYEFSNKGADIFLESLSRLNFLLRMHKSDITVMVFFIMPAKTNNFNVETLKGQAVRKQLWDVAHSVKEKFGKKLYDALLRGEIPDLNDILDRDDLTIMKRAIFSTQRQSLPPVTTHNMIDDSTDPILSTIRRIGLFNNRTDRVKVILHPEFLSSTSPLLPMDYEEFVRGCHLGVFPSYYEPWGYTPAECTVMGIPSVTTNLSGFGCFMQEHVADPTAYGIYIVDRRFRSPDDSCNQLTKFLYGFCKQSRRQRIIQRNRTERLSDLLDWRYLGRYYQHARHLTLSRAFPDKFHVELTSPPTTEGFKYPRPSSVPPSPSGSQASSPQSSDVEDEVEDERYDEEEEAERDRLNIKSPFSLSHVPHGKKKLHGEYKN.

Phosphoserine; by PKA is present on Ser8. Ser11 carries the post-translational modification Phosphoserine. Lys40 serves as a coordination point for UDP. The UDP-alpha-D-glucose site is built by His205 and Arg211. The alpha-D-glucose 6-phosphate site is built by His291, Glu292, Gln294, His297, and Lys301. Residue Arg331 coordinates UDP. Arg331 is a binding site for UDP-alpha-D-glucose. His501 is a binding site for alpha-D-glucose 6-phosphate. 3 residues coordinate UDP-alpha-D-glucose: Glu510, Trp512, and Gly513. Thr515 provides a ligand contact to UDP. Positions 582 and 586 each coordinate alpha-D-glucose 6-phosphate. Ser627 is subject to Phosphoserine. The disordered stretch occupies residues 628 to 703 (PPTTEGFKYP…KKKLHGEYKN (76 aa)). 4 positions are modified to phosphoserine; by GSK3-alpha and GSK3-beta: Ser641, Ser645, Ser649, and Ser653. The segment covering 647 to 657 (SGSQASSPQSS) has biased composition (low complexity). The residue at position 657 (Ser657) is a Phosphoserine; by CK2. A compositionally biased stretch (acidic residues) spans 658–674 (DVEDEVEDERYDEEEEA). Residue Ser683 is modified to Phosphoserine.

This sequence belongs to the glycosyltransferase 3 family. In terms of assembly, part of the glycogen synthase (GS)-glycogenin complex, a heterooctamer composed of a tetramer of GS and 2 dimers of glycogenin, where each GS protomer binds to one glycogenin subunit (via glycogenin C-terminus); the GS tetramer may dissociate from glycogenin dimers to continue glycogen polymerization on its own. May also form a heterooctamer complex with GYG1 (via GYG1 C-terminus). In terms of processing, primed phosphorylation at Ser-657 (site 5) by CSNK2A1 and CSNK2A2 is required for inhibitory phosphorylation at Ser-641 (site 3a), Ser-645 (site 3b), Ser-649 (site 3c) and Ser-653 (site 4) by GSK3A an GSK3B. Dephosphorylation at Ser-641 and Ser-645 by PP1 activates the enzyme. Phosphorylation at Ser-8 is not required for interaction with GYG1. Interaction with GYG1 does not regulate the phosphorylation at Ser-8 and Ser-641. In terms of tissue distribution, specifically expressed in liver (at protein level).

It carries out the reaction [(1-&gt;4)-alpha-D-glucosyl](n) + UDP-alpha-D-glucose = [(1-&gt;4)-alpha-D-glucosyl](n+1) + UDP + H(+). It functions in the pathway glycan biosynthesis; glycogen biosynthesis. Allosteric activation by glucose-6-phosphate. Phosphorylation reduces the activity towards UDP-glucose. When in the non-phosphorylated state, glycogen synthase does not require glucose-6-phosphate as an allosteric activator; when phosphorylated it does. Glycogen synthase participates in the glycogen biosynthetic process along with glycogenin and glycogen branching enzyme. Extends the primer composed of a few glucose units formed by glycogenin by adding new glucose units to it. In this context, glycogen synthase transfers the glycosyl residue from UDP-Glc to the non-reducing end of alpha-1,4-glucan. The chain is Glycogen [starch] synthase, liver from Homo sapiens (Human).